A 475-amino-acid polypeptide reads, in one-letter code: Ankyrin repeat, SAM and basic leucine zipper domain-containing protein 1 (475 aa).

Positions 1–25 (MAAGTLRGLAVAGGGESSDSEDDGW) are disordered. A phosphoserine mark is found at Ser-17, Ser-18, and Ser-20. 6 ANK repeats span residues 45 to 74 (EKNETFKKALTTGDISLVKELLDSGINVDS), 78 to 107 (YGWTPLMYAASVANAELVRFLLDRGANASF), 110 to 144 (DKLTILISACSARGSEEQVLKCVELLLSRNADPNT), 148 to 177 (RLMTPIMYAARDGHTQVVALLVAHGAEVNA), 181 to 210 (NGYTALTWAARQGHKNVILKLLELGANKML), and 214 to 243 (DGRTPSEIAKRNKHLEIFNFLSLTLNPLEG). One can recognise an SAM domain in the interval 272–334 (PYTAFGDLEI…KILAALKELE (63 aa)).

In terms of assembly, interacts with DDX4, PIWIL1, RANBP9 and TDRD1. In terms of tissue distribution, expressed exclusively in testis and ovary with higher levels in testis.

The protein resides in the cytoplasm. Plays a central role during spermatogenesis by repressing transposable elements and preventing their mobilization, which is essential for the germline integrity. Acts via the piRNA metabolic process, which mediates the repression of transposable elements during meiosis by forming complexes composed of piRNAs and Piwi proteins and governs the methylation and subsequent repression of transposons. Its association with pi-bodies suggests a participation in the primary piRNAs metabolic process. Required prior to the pachytene stage to facilitate the production of multiple types of piRNAs, including those associated with repeats involved in regulation of retrotransposons. May act by mediating protein-protein interactions during germ cell maturation. The protein is Ankyrin repeat, SAM and basic leucine zipper domain-containing protein 1 of Mus musculus (Mouse).